Reading from the N-terminus, the 156-residue chain is Small ribosomal subunit protein uS7 (156 aa).

This sequence belongs to the universal ribosomal protein uS7 family. In terms of assembly, part of the 30S ribosomal subunit. Contacts proteins S9 and S11.

In terms of biological role, one of the primary rRNA binding proteins, it binds directly to 16S rRNA where it nucleates assembly of the head domain of the 30S subunit. Is located at the subunit interface close to the decoding center, probably blocks exit of the E-site tRNA. This is Small ribosomal subunit protein uS7 from Alkaliphilus metalliredigens (strain QYMF).